The following is a 481-amino-acid chain: Flavonol 3-O-glucosyltransferase UGT71C1 (481 aa).

His-19 serves as the catalytic Proton acceptor. An an anthocyanidin-binding site is contributed by His-19. Residue Asp-131 is the Charge relay of the active site. Residues Thr-153, Ala-352, Gln-354, His-369, Trp-372, Asn-373, Ser-374, and Glu-377 each contribute to the UDP-alpha-D-glucose site. Residue Ala-392 coordinates an anthocyanidin. Glu-393 and Gln-394 together coordinate UDP-alpha-D-glucose.

It belongs to the UDP-glycosyltransferase family.

The enzyme catalyses a flavonol + UDP-alpha-D-glucose = a flavonol 3-O-beta-D-glucoside + UDP + H(+). The catalysed reaction is a 7-O-hydroxy-flavonol + UDP-alpha-D-glucose = a flavonol 7-O-beta-D-glucoside + UDP + H(+). In terms of biological role, possesses quercetin 7-O-glucosyltransferase and 3'-O-glucosyltransferase activities in vitro. Also active in vitro on benzoates and benzoate derivatives. Glucosylates other secondary metabolites in vitro like trans-resveratrol, curcumin, vanillin and etoposide. The chain is Flavonol 3-O-glucosyltransferase UGT71C1 from Arabidopsis thaliana (Mouse-ear cress).